The following is a 701-amino-acid chain: Lutropin-choriogonadotropic hormone receptor (701 aa).

The signal sequence occupies residues 1 to 26; that stretch reads MGRPSLALRLLLALLLLPPPAPLLWA. Residues 27–365 are Extracellular-facing; it reads LRPAPCPEPC…EDIMGYNFLR (339 aa). N-linked (GlcNAc...) asparagine glycosylation occurs at asparagine 101. LRR repeat units lie at residues 124–149, 151–173, 174–198, 200–222, 223–246, and 250–271; these read LPRLKYLSICNTGIHKLPDVTKIFSS, FNFILEICDNLHITTIPRNAFQG, MNNESITLKLYGNGFEEIQSHAFNG, TLISLELKENARLEKMHNDAFRG, ATGPSILDISSTKLQALPTYGLES, and LIATSSYSLKKLPSREKFTNLL. Asparagine 176 and asparagine 197 each carry an N-linked (GlcNAc...) asparagine glycan. N-linked (GlcNAc...) asparagine glycans are attached at residues asparagine 293, asparagine 301, and asparagine 315. A Sulfotyrosine modification is found at tyrosine 333. The helical transmembrane segment at 366-387 threads the bilayer; that stretch reads VLIWLINILAITGNVTVLFVLL. At 388–397 the chain is on the cytoplasmic side; the sequence is TSRYKLTVPR. A helical membrane pass occupies residues 398-418; that stretch reads FLMCNLSFADFCMGLYLLLIA. Topologically, residues 419–441 are extracellular; it reads SVDAQTKGQYYNHAIDWQTGSGC. Residues cysteine 441 and cysteine 516 are joined by a disulfide bond. The chain crosses the membrane as a helical span at residues 442–464; it reads SAAGFFTVFASELSVYTLTVITL. Over 465–484 the chain is Cytoplasmic; that stretch reads ERWHTITYAIQLDQKLRLKH. Residues 485 to 507 form a helical membrane-spanning segment; sequence AIPVMLGGWLFSTLIAVLPLVGV. The Extracellular segment spans residues 508–527; that stretch reads SNYMKVSICLPMDVESTLSQ. Residues 528-551 traverse the membrane as a helical segment; that stretch reads VYILTILILNVMAFIIICACYIKI. At 552 to 572 the chain is on the cytoplasmic side; sequence YFAVQNPELMATNKDTKIAKK. Residues 573–596 form a helical membrane-spanning segment; it reads MAVLIFTDFTCMAPISFFAISAAF. At 597–607 the chain is on the extracellular side; that stretch reads KVPLITVTNSK. A helical membrane pass occupies residues 608-629; the sequence is VLLVLFYPVNSCANPFLYAIFT. Topologically, residues 630–701 are cytoplasmic; that stretch reads KAFQRDFFLL…VLDKTCYKEC (72 aa). 2 S-palmitoyl cysteine lipidation sites follow: cysteine 645 and cysteine 646.

The protein belongs to the G-protein coupled receptor 1 family. FSH/LSH/TSH subfamily. Post-translationally, sulfated.

It is found in the cell membrane. In terms of biological role, receptor for lutropin-choriogonadotropic hormone. The activity of this receptor is mediated by G proteins which activate adenylate cyclase. The protein is Lutropin-choriogonadotropic hormone receptor (LHCGR) of Bos taurus (Bovine).